Consider the following 168-residue polypeptide: uncharacterized protein (168 aa).

One can recognise an N-acetyltransferase domain in the interval 14 to 168 (IDIPLLDAAS…EYKHWIYVTK (155 aa)).

It belongs to the acetyltransferase family.

This is an uncharacterized protein from Bacillus subtilis (strain 168).